The following is a 187-amino-acid chain: Ribosome-recycling factor (187 aa).

Belongs to the RRF family.

It localises to the cytoplasm. Functionally, responsible for the release of ribosomes from messenger RNA at the termination of protein biosynthesis. May increase the efficiency of translation by recycling ribosomes from one round of translation to another. The protein is Ribosome-recycling factor of Rhodopseudomonas palustris (strain HaA2).